A 97-amino-acid polypeptide reads, in one-letter code: Exodeoxyribonuclease 7 small subunit (97 aa).

The segment at 1 to 22 (MAKTASPGATPPDNGTEPLPDN) is disordered.

Belongs to the XseB family. Heterooligomer composed of large and small subunits.

The protein resides in the cytoplasm. It catalyses the reaction Exonucleolytic cleavage in either 5'- to 3'- or 3'- to 5'-direction to yield nucleoside 5'-phosphates.. Functionally, bidirectionally degrades single-stranded DNA into large acid-insoluble oligonucleotides, which are then degraded further into small acid-soluble oligonucleotides. The sequence is that of Exodeoxyribonuclease 7 small subunit from Burkholderia ambifaria (strain MC40-6).